We begin with the raw amino-acid sequence, 322 residues long: MTFARIAGTGSYLPDNIVTNRDLEQKVETSDQWIRERTGIEQRHIALPGQSTVDLAEQAALNAIEAAGIEATDIDLIVFATTTPDKVFPSCACILQARLGIQGCPAFDIQAVCSGFVYALATAEKFIRTGSSKKALVIGAEVFSRILNWEDRTTCVLFGDGAGAVVLEASEETGILSTHLHADGRYEELLHVPCGIANDFDAVKAGQAFVEMKGNEVFKVAVNTLGRIVDETLEANQMQKSEIDWLVPHQANLRIIAATARKLDMPMDQVVVTVNRHGNTSAASIPLALDEAVRDGRIQRGQVVLLEAFGGGFTWGSALLRY.

Active-site residues include Cys113 and His249. Residues 250-254 are ACP-binding; sequence QANLR. Residue Asn279 is part of the active site.

This sequence belongs to the thiolase-like superfamily. FabH family. In terms of assembly, homodimer.

It localises to the cytoplasm. The catalysed reaction is malonyl-[ACP] + acetyl-CoA + H(+) = 3-oxobutanoyl-[ACP] + CO2 + CoA. Its pathway is lipid metabolism; fatty acid biosynthesis. Catalyzes the condensation reaction of fatty acid synthesis by the addition to an acyl acceptor of two carbons from malonyl-ACP. Catalyzes the first condensation reaction which initiates fatty acid synthesis and may therefore play a role in governing the total rate of fatty acid production. Possesses both acetoacetyl-ACP synthase and acetyl transacylase activities. Its substrate specificity determines the biosynthesis of branched-chain and/or straight-chain of fatty acids. The chain is Beta-ketoacyl-[acyl-carrier-protein] synthase III from Marinobacter nauticus (strain ATCC 700491 / DSM 11845 / VT8) (Marinobacter aquaeolei).